The primary structure comprises 416 residues: Adenylosuccinate synthetase (416 aa).

GTP is bound by residues 13-19 (GDEGKGK) and 41-43 (GHT). Catalysis depends on Asp-14, which acts as the Proton acceptor. 2 residues coordinate Mg(2+): Asp-14 and Gly-41. IMP is bound by residues 14–17 (DEGK), 39–42 (NAGH), Thr-126, Arg-140, Gln-220, Thr-235, and Arg-299. His-42 serves as the catalytic Proton donor. Residue 295 to 301 (VSTGRKR) coordinates substrate. GTP contacts are provided by residues Arg-301, 327–329 (KLD), and 405–407 (STS).

Belongs to the adenylosuccinate synthetase family. As to quaternary structure, homodimer. The cofactor is Mg(2+).

The protein localises to the cytoplasm. The enzyme catalyses IMP + L-aspartate + GTP = N(6)-(1,2-dicarboxyethyl)-AMP + GDP + phosphate + 2 H(+). It participates in purine metabolism; AMP biosynthesis via de novo pathway; AMP from IMP: step 1/2. In terms of biological role, plays an important role in the de novo pathway of purine nucleotide biosynthesis. Catalyzes the first committed step in the biosynthesis of AMP from IMP. The protein is Adenylosuccinate synthetase of Campylobacter jejuni subsp. jejuni serotype O:2 (strain ATCC 700819 / NCTC 11168).